The chain runs to 436 residues: Trigger factor (436 aa).

The 86-residue stretch at 163–248 (GDRVTVDFEG…VKKIEAAHLP (86 aa)) folds into the PPIase FKBP-type domain.

Belongs to the FKBP-type PPIase family. Tig subfamily.

The protein localises to the cytoplasm. It carries out the reaction [protein]-peptidylproline (omega=180) = [protein]-peptidylproline (omega=0). In terms of biological role, involved in protein export. Acts as a chaperone by maintaining the newly synthesized protein in an open conformation. Functions as a peptidyl-prolyl cis-trans isomerase. The protein is Trigger factor of Acidovorax ebreus (strain TPSY) (Diaphorobacter sp. (strain TPSY)).